The primary structure comprises 138 residues: Acidic phospholipase A2 PePLA2 (138 aa).

An N-terminal signal peptide occupies residues 1–16 (MRTLWIMAVLLLGVEG). 7 disulfides stabilise this stretch: Cys-42–Cys-131, Cys-44–Cys-60, Cys-59–Cys-110, Cys-65–Cys-138, Cys-66–Cys-103, Cys-73–Cys-97, and Cys-91–Cys-101. Residues Tyr-43, Gly-45, and Gly-47 each contribute to the Ca(2+) site. Residue His-63 is part of the active site. Asp-64 is a binding site for Ca(2+). Asp-104 is a catalytic residue.

Belongs to the phospholipase A2 family. Group II subfamily. D49 sub-subfamily. Requires Ca(2+) as cofactor. Expressed by the venom gland.

It is found in the secreted. The enzyme catalyses a 1,2-diacyl-sn-glycero-3-phosphocholine + H2O = a 1-acyl-sn-glycero-3-phosphocholine + a fatty acid + H(+). Functionally, PLA2 catalyzes the calcium-dependent hydrolysis of the 2-acyl groups in 3-sn-phosphoglycerides. The polypeptide is Acidic phospholipase A2 PePLA2 (Protobothrops elegans (Elegant pitviper)).